The primary structure comprises 180 residues: Translation initiation factor IF-3 (180 aa).

It belongs to the IF-3 family. In terms of assembly, monomer.

It is found in the cytoplasm. Functionally, IF-3 binds to the 30S ribosomal subunit and shifts the equilibrium between 70S ribosomes and their 50S and 30S subunits in favor of the free subunits, thus enhancing the availability of 30S subunits on which protein synthesis initiation begins. This is Translation initiation factor IF-3 from Xylella fastidiosa (strain 9a5c).